A 22-amino-acid chain; its full sequence is Superoxide dismutase [Cu-Zn] 2 (22 aa).

The protein belongs to the Cu-Zn superoxide dismutase family. In terms of assembly, homodimer. Cu cation is required as a cofactor. Requires Zn(2+) as cofactor. Dominant isozyme in roots.

The protein localises to the cytoplasm. The enzyme catalyses 2 superoxide + 2 H(+) = H2O2 + O2. In terms of biological role, destroys radicals which are normally produced within the cells and which are toxic to biological systems. The sequence is that of Superoxide dismutase [Cu-Zn] 2 from Picea abies (Norway spruce).